Reading from the N-terminus, the 740-residue chain is Pheromone-regulated membrane protein 10 (740 aa).

Disordered stretches follow at residues 1-48, 65-97, and 241-269; these read MGKN…RSGL, FADE…KEEC, and NQPG…PTGE. Basic and acidic residues predominate over residues 7 to 18; it reads QAAEGEEARRGS. The span at 19 to 33 shows a compositional bias: low complexity; sequence ESSGSSAEPSGAVAE. The segment covering 67–76 has biased composition (acidic residues); it reads DEDEVVEQDE. The span at 256-267 shows a compositional bias: polar residues; that stretch reads SAQTLSSETLPT. Helical transmembrane passes span 422-442, 445-465, 475-495, 499-519, 541-561, 574-594, 599-619, 622-642, 651-671, and 707-727; these read AWMC…FAFG, WINL…QFIV, VFEI…GSIP, ICFG…YIIL, IIYS…FGWI, ELSP…LSLI, WSQI…TYWS, HFTA…GIMG, GLAM…GIAS, and ITMI…TLVV.

The protein belongs to the ThrE exporter (TC 2.A.79) family.

It localises to the membrane. The chain is Pheromone-regulated membrane protein 10 from Eremothecium gossypii (strain ATCC 10895 / CBS 109.51 / FGSC 9923 / NRRL Y-1056) (Yeast).